Consider the following 416-residue polypeptide: Diaminobutyrate--2-oxoglutarate transaminase (416 aa).

The residue at position 263 (K263) is an N6-(pyridoxal phosphate)lysine.

It belongs to the class-III pyridoxal-phosphate-dependent aminotransferase family. Pyridoxal 5'-phosphate is required as a cofactor.

It carries out the reaction L-2,4-diaminobutanoate + 2-oxoglutarate = L-aspartate 4-semialdehyde + L-glutamate. The protein operates within amine and polyamine biosynthesis; ectoine biosynthesis; L-ectoine from L-aspartate 4-semialdehyde: step 1/3. Catalyzes reversively the conversion of L-aspartate beta-semialdehyde (ASA) to L-2,4-diaminobutyrate (DABA) by transamination with L-glutamate. The polypeptide is Diaminobutyrate--2-oxoglutarate transaminase (ectB) (Virgibacillus pantothenticus).